The sequence spans 184 residues: Putative lyase MJ0807 (184 aa).

It belongs to the chorismate pyruvate-lyase type 2 family.

This is Putative lyase MJ0807 from Methanocaldococcus jannaschii (strain ATCC 43067 / DSM 2661 / JAL-1 / JCM 10045 / NBRC 100440) (Methanococcus jannaschii).